The sequence spans 312 residues: L-lactate dehydrogenase (312 aa).

NAD(+) is bound by residues V14, D35, and Y66. Residues Q83 and R90 each coordinate substrate. NAD(+)-binding positions include S103, 120-122 (ASN), and S145. A substrate-binding site is contributed by 122–125 (NPVD). 150–153 (DSAR) serves as a coordination point for substrate. The Proton acceptor role is filled by H177. Y220 carries the phosphotyrosine modification. Position 229 (T229) interacts with substrate.

It belongs to the LDH/MDH superfamily. LDH family. In terms of assembly, homotetramer.

It is found in the cytoplasm. It carries out the reaction (S)-lactate + NAD(+) = pyruvate + NADH + H(+). It functions in the pathway fermentation; pyruvate fermentation to lactate; (S)-lactate from pyruvate: step 1/1. Its function is as follows. Catalyzes the conversion of lactate to pyruvate. This is L-lactate dehydrogenase from Mycoplasma genitalium (strain ATCC 33530 / DSM 19775 / NCTC 10195 / G37) (Mycoplasmoides genitalium).